The sequence spans 87 residues: MANIKSAKKRAVQSEKRRKHNASRRSMVRTFIKKVYAAIAAGDKDAAQKAFNEMQPIVDRQSCKGLIHKNKAARHKSNLVAQINAMQ.

The interval 1-25 (MANIKSAKKRAVQSEKRRKHNASRR) is disordered.

It belongs to the bacterial ribosomal protein bS20 family.

Binds directly to 16S ribosomal RNA. The sequence is that of Small ribosomal subunit protein bS20 from Yersinia pseudotuberculosis serotype O:1b (strain IP 31758).